The primary structure comprises 491 residues: AP-2 complex subunit mu (491 aa).

A phosphoserine mark is found at Ser179, Ser180, and Ser181. One can recognise an MHD domain in the interval 209 to 490; the sequence is KDEVFLYVNE…ISKAGSYEVR (282 aa).

This sequence belongs to the adaptor complexes medium subunit family. Adaptor protein complex 2 (AP-2) is a heterotetramer composed of two large adaptins (alpha-type subunit APL3 and beta-type subunit APL1), a medium chain (mu-type subunit APM4) and a small adaptin (sigma-type subunit APS2).

It localises to the membrane. It is found in the clathrin-coated pit. The protein localises to the cytoplasmic vesicle. The protein resides in the clathrin-coated vesicle membrane. Component of the adaptor complexes which link clathrin to receptors in coated vesicles. Clathrin-associated protein complexes are believed to interact with the cytoplasmic tails of membrane proteins, leading to their selection and concentration. The protein is AP-2 complex subunit mu (APM4) of Saccharomyces cerevisiae (strain ATCC 204508 / S288c) (Baker's yeast).